Consider the following 154-residue polypeptide: UPF0178 protein RC1_2062 (154 aa).

This sequence belongs to the UPF0178 family.

This chain is UPF0178 protein RC1_2062, found in Rhodospirillum centenum (strain ATCC 51521 / SW).